A 542-amino-acid chain; its full sequence is CTP synthase (542 aa).

An amidoligase domain region spans residues 1–265 (MARYVFITGG…DSEVLSAFGI (265 aa)). Ser13 provides a ligand contact to CTP. Ser13 contacts UTP. An ATP-binding site is contributed by 14-19 (SLGKGI). Tyr54 contacts L-glutamine. Asp71 is a binding site for ATP. Positions 71 and 139 each coordinate Mg(2+). Residues 146 to 148 (DIE), 186 to 191 (KTKPTQ), and Lys222 each bind CTP. Residues 186-191 (KTKPTQ) and Lys222 contribute to the UTP site. Residues 291-541 (TIAVVGKYTG…IEAAIEQSRL (251 aa)) form the Glutamine amidotransferase type-1 domain. An L-glutamine-binding site is contributed by Gly353. The active-site Nucleophile; for glutamine hydrolysis is Cys380. Residues 381–384 (FGMQ), Glu404, and Arg469 each bind L-glutamine. Catalysis depends on residues His514 and Glu516.

It belongs to the CTP synthase family. In terms of assembly, homotetramer.

It catalyses the reaction UTP + L-glutamine + ATP + H2O = CTP + L-glutamate + ADP + phosphate + 2 H(+). The enzyme catalyses L-glutamine + H2O = L-glutamate + NH4(+). The catalysed reaction is UTP + NH4(+) + ATP = CTP + ADP + phosphate + 2 H(+). It participates in pyrimidine metabolism; CTP biosynthesis via de novo pathway; CTP from UDP: step 2/2. Its activity is regulated as follows. Allosterically activated by GTP, when glutamine is the substrate; GTP has no effect on the reaction when ammonia is the substrate. The allosteric effector GTP functions by stabilizing the protein conformation that binds the tetrahedral intermediate(s) formed during glutamine hydrolysis. Inhibited by the product CTP, via allosteric rather than competitive inhibition. Its function is as follows. Catalyzes the ATP-dependent amination of UTP to CTP with either L-glutamine or ammonia as the source of nitrogen. Regulates intracellular CTP levels through interactions with the four ribonucleotide triphosphates. The sequence is that of CTP synthase from Brucella melitensis biotype 2 (strain ATCC 23457).